Reading from the N-terminus, the 37-residue chain is Palicourein (37 aa).

A cross-link (cyclopeptide (Gly-Asn)) is located at residues 1–37; the sequence is GDPTFCGETCRVIPVCTYSAALGCTCDDRSDGLCKRN. 3 disulfides stabilise this stretch: cysteine 6-cysteine 24, cysteine 10-cysteine 26, and cysteine 16-cysteine 34.

Belongs to the cyclotide family. Post-translationally, this is a cyclic peptide.

Its function is as follows. Probably participates in a plant defense mechanism. Inhibits the cytopathic effects of the human immunodeficiency virus. This chain is Palicourein, found in Palicourea condensata (Cappel).